A 111-amino-acid polypeptide reads, in one-letter code: Probable 4-amino-4-deoxy-L-arabinose-phosphoundecaprenol flippase subunit ArnE (111 aa).

3 helical membrane-spanning segments follow: residues 38-58 (LWLGLALICMGAAMVLWLLVL), 61-81 (LPVGIAYPMLSLNFVWVTLAA), and 91-111 (PRHWFGVALIISGIIILGSAA). Residues 40 to 109 (LGLALICMGA…IISGIIILGS (70 aa)) enclose the EamA domain.

It belongs to the ArnE family. Heterodimer of ArnE and ArnF.

It is found in the cell inner membrane. The protein operates within bacterial outer membrane biogenesis; lipopolysaccharide biosynthesis. In terms of biological role, translocates 4-amino-4-deoxy-L-arabinose-phosphoundecaprenol (alpha-L-Ara4N-phosphoundecaprenol) from the cytoplasmic to the periplasmic side of the inner membrane. The chain is Probable 4-amino-4-deoxy-L-arabinose-phosphoundecaprenol flippase subunit ArnE from Salmonella enteritidis PT4 (strain P125109).